Here is a 117-residue protein sequence, read N- to C-terminus: uncharacterized protein (117 aa).

This is an uncharacterized protein from Sinorhizobium fredii (strain NBRC 101917 / NGR234).